The chain runs to 243 residues: DNA repair protein RecO (243 aa).

It belongs to the RecO family.

In terms of biological role, involved in DNA repair and RecF pathway recombination. The sequence is that of DNA repair protein RecO from Phenylobacterium zucineum (strain HLK1).